Here is an 893-residue protein sequence, read N- to C-terminus: TBC domain-containing protein kinase-like protein (893 aa).

The 273-residue stretch at 1–273 (MFPLKDAEMG…PDQLMKDKVF (273 aa)) folds into the Protein kinase domain. The Rab-GAP TBC domain maps to 466 to 651 (DIPPLMRGLT…HLWDTLLLGN (186 aa)). Residues 710–749 (YRQHAQPPKPSSDSSGGRSSAPYFSAECPDPPKTDLSRES) form a disordered region. A compositionally biased stretch (low complexity) spans 720–729 (SSDSSGGRSS). The 100-residue stretch at 790–889 (SKPKLLVVDI…IKPTGLLTIP (100 aa)) folds into the Rhodanese domain.

It belongs to the protein kinase superfamily. Component of the FERRY complex composed of five subunits, TBCK, PPP1R21, FERRY3, CRYZL1 and GATD1 with a ratio of 1:2:1:2:4, respectively.

The protein localises to the cytoplasm. It is found in the cytoskeleton. The protein resides in the spindle. Its subcellular location is the midbody. It localises to the early endosome. Functionally, component of the FERRY complex (Five-subunit Endosomal Rab5 and RNA/ribosome intermediary). The FERRY complex directly interacts with mRNAs and RAB5A, and functions as a RAB5A effector involved in the localization and the distribution of specific mRNAs most likely by mediating their endosomal transport. The complex recruits mRNAs and ribosomes to early endosomes through direct mRNA-interaction. Also involved in the modulation of mTOR signaling and expression of mTOR complex components. Involved in the control of actin-cytoskeleton organization. This is TBC domain-containing protein kinase-like protein from Homo sapiens (Human).